Consider the following 549-residue polypeptide: MAKFVFITGGVVSSIGKGIVAASLGRLLKSRGYNVSILKLDPYLNVDPGTMSPFQHGEVFVTEDGAETDLDLGHYERFTDTAMSRLNSVTTGSIYQSVINKERRGDYNGGTVQVIPHITGEIRERIHRVASNSNADVVITEIGGTVGDIESLPFLEAIREFREDVGRNDLAYIHVTLLPFIGTSGELKTKPTQHSVKELRSIGIQPDVLICRSDRDISDDLKRKIGGFCGVPTRAVIPSLDADSIYAVPLILEQEGLCREVLDVLNLTDHDSDMAAWEQLVNKLRNPGPSVKIALVGKYVQLNDAYLSVVEALQHACIAQDASLDLHWVCAEQIEADGADTLLRGMDAVVVPGGFGNRGVDGKIAAIRCAREQRVPFLGLCLGMQTAVIEWARNQAGLTGATSAELDENTPHPVIHLLPEQQDVVDLGGTMRLGVYPCRIAPGTLAQRLYGDEVVYERHRHRYEFNNSYRNLFLESGYVVSGTSPDGRLVELIELKGHPFFTACQYHPEFLSRPGQPHPLFRGLIEAAQQRLPDSPAEALRQQGDIAIP.

Residues 1 to 267 (MAKFVFITGG…CREVLDVLNL (267 aa)) are amidoligase domain. Ser-13 is a binding site for CTP. A UTP-binding site is contributed by Ser-13. ATP contacts are provided by residues 14–19 (SIGKGI) and Asp-71. Mg(2+) is bound by residues Asp-71 and Glu-141. Residues 148–150 (DIE), 188–193 (KTKPTQ), and Lys-224 contribute to the CTP site. UTP is bound by residues 188–193 (KTKPTQ) and Lys-224. One can recognise a Glutamine amidotransferase type-1 domain in the interval 292–534 (KIALVGKYVQ…IEAAQQRLPD (243 aa)). Gly-354 contributes to the L-glutamine binding site. Cys-381 (nucleophile; for glutamine hydrolysis) is an active-site residue. L-glutamine is bound by residues 382–385 (LGMQ), Glu-405, and Arg-462. Active-site residues include His-507 and Glu-509.

This sequence belongs to the CTP synthase family. Homotetramer.

It catalyses the reaction UTP + L-glutamine + ATP + H2O = CTP + L-glutamate + ADP + phosphate + 2 H(+). The enzyme catalyses L-glutamine + H2O = L-glutamate + NH4(+). The catalysed reaction is UTP + NH4(+) + ATP = CTP + ADP + phosphate + 2 H(+). The protein operates within pyrimidine metabolism; CTP biosynthesis via de novo pathway; CTP from UDP: step 2/2. Its activity is regulated as follows. Allosterically activated by GTP, when glutamine is the substrate; GTP has no effect on the reaction when ammonia is the substrate. The allosteric effector GTP functions by stabilizing the protein conformation that binds the tetrahedral intermediate(s) formed during glutamine hydrolysis. Inhibited by the product CTP, via allosteric rather than competitive inhibition. Its function is as follows. Catalyzes the ATP-dependent amination of UTP to CTP with either L-glutamine or ammonia as the source of nitrogen. Regulates intracellular CTP levels through interactions with the four ribonucleotide triphosphates. This Synechococcus sp. (strain CC9605) protein is CTP synthase.